The sequence spans 252 residues: Methylthioribulose-1-phosphate dehydratase (252 aa).

C105 provides a ligand contact to substrate. Positions 123 and 125 each coordinate Zn(2+). Catalysis depends on E151, which acts as the Proton donor/acceptor. H208 contacts Zn(2+).

The protein belongs to the aldolase class II family. MtnB subfamily. It depends on Zn(2+) as a cofactor.

It localises to the cytoplasm. It catalyses the reaction 5-(methylsulfanyl)-D-ribulose 1-phosphate = 5-methylsulfanyl-2,3-dioxopentyl phosphate + H2O. The protein operates within amino-acid biosynthesis; L-methionine biosynthesis via salvage pathway; L-methionine from S-methyl-5-thio-alpha-D-ribose 1-phosphate: step 2/6. Its function is as follows. Catalyzes the dehydration of methylthioribulose-1-phosphate (MTRu-1-P) into 2,3-diketo-5-methylthiopentyl-1-phosphate (DK-MTP-1-P). This chain is Methylthioribulose-1-phosphate dehydratase, found in Sclerotinia sclerotiorum (strain ATCC 18683 / 1980 / Ss-1) (White mold).